We begin with the raw amino-acid sequence, 617 residues long: Translation initiation factor IF-2 (617 aa).

Over residues Met1–Lys11 the composition is skewed to basic residues. A disordered region spans residues Met1–Gln25. A tr-type G domain is found at Pro119–Tyr288. The G1 stretch occupies residues Gly128–Thr135. Residue Gly128–Thr135 participates in GTP binding. The tract at residues Gly153 to Lys157 is G2. Positions Asp175–Gly178 are G3. GTP is bound by residues Asp175 to His179 and Asn229 to Asp232. Residues Asn229–Asp232 are G4. Positions Ser265 to Leu267 are G5.

This sequence belongs to the TRAFAC class translation factor GTPase superfamily. Classic translation factor GTPase family. IF-2 subfamily.

It localises to the cytoplasm. In terms of biological role, one of the essential components for the initiation of protein synthesis. Protects formylmethionyl-tRNA from spontaneous hydrolysis and promotes its binding to the 30S ribosomal subunits. Also involved in the hydrolysis of GTP during the formation of the 70S ribosomal complex. This Mycoplasma pneumoniae (strain ATCC 29342 / M129 / Subtype 1) (Mycoplasmoides pneumoniae) protein is Translation initiation factor IF-2 (infB).